A 416-amino-acid polypeptide reads, in one-letter code: Histidine--tRNA ligase (416 aa).

It belongs to the class-II aminoacyl-tRNA synthetase family.

The protein resides in the cytoplasm. The catalysed reaction is tRNA(His) + L-histidine + ATP = L-histidyl-tRNA(His) + AMP + diphosphate + H(+). This Methanocaldococcus jannaschii (strain ATCC 43067 / DSM 2661 / JAL-1 / JCM 10045 / NBRC 100440) (Methanococcus jannaschii) protein is Histidine--tRNA ligase (hisS).